The primary structure comprises 1267 residues: RNA-directed RNA polymerase lambda-3 (1267 aa).

One can recognise a RdRp catalytic domain in the interval 555-792 (LSPTSGSAVI…KLYFIFGCRI (238 aa)).

The protein belongs to the reoviridae RNA-directed RNA polymerase family.

Its subcellular location is the virion. It catalyses the reaction RNA(n) + a ribonucleoside 5'-triphosphate = RNA(n+1) + diphosphate. RNA-directed RNA polymerase that is involved in transcription and genome replication. Following infection, it catalyzes the synthesis of fully conservative plus strands. After core assembly, which consists in recruitment of one capped plus-strand for each genomic segments and polymerase complexes, the polymerase switches mode and catalyzes the synthesis of complementary minus-strands. This Reovirus type 3 (strain Dearing) (T3D) protein is RNA-directed RNA polymerase lambda-3 (L1).